The chain runs to 359 residues: HTH-type transcriptional regulator Rv3575c (359 aa).

In terms of domain architecture, HTH lacI-type spans Ala-9–Thr-64. The H-T-H motif DNA-binding region spans Leu-11 to Asn-30.

Its function is as follows. Transcriptional regulator that negatively regulates transcription of the mce4 operon, which is involved in cholesterol transport and utilization. Acts by binding to the promoter region of the mce4 operon. It affects the utilization of host cholesterol as a carbon source, impacting the host's innate immune response. The sequence is that of HTH-type transcriptional regulator Rv3575c from Mycobacterium tuberculosis (strain ATCC 25618 / H37Rv).